The following is a 257-amino-acid chain: Acetylglutamate kinase (257 aa).

Substrate is bound by residues 41–42 (GG), arginine 63, and asparagine 155.

It belongs to the acetylglutamate kinase family. ArgB subfamily.

The protein localises to the cytoplasm. The enzyme catalyses N-acetyl-L-glutamate + ATP = N-acetyl-L-glutamyl 5-phosphate + ADP. The protein operates within amino-acid biosynthesis; L-arginine biosynthesis; N(2)-acetyl-L-ornithine from L-glutamate: step 2/4. Functionally, catalyzes the ATP-dependent phosphorylation of N-acetyl-L-glutamate. This Solibacter usitatus (strain Ellin6076) protein is Acetylglutamate kinase.